A 632-amino-acid chain; its full sequence is MYDLLKTIDDPADLRRLDRRQLQPLADELRAFVLDSVSQTGGHLSSNLGTVELTIALHYVFDTPRDRIVWDVGHQTYPHKILTGRRDQMSTLRQLGGISGFPKRDESPYDTFGTAHSSTSISAALGMAIGSKLRGDDRFAIAVIGDGAMTAGMAFEAMNNAGVEDDVPLLVILNDNDMSISPPVGALNRHLARLMSGRFYAAARAGVERVLRHAPPVLDLARKLEEHAKGMIVPATLFEEFGFNYIGPIDGHDLDSLIPTLQNIKELRGPQFLHVVTKKGQGYKLAEADPVLYHGPGKFNPAEGIKPSTTPAKKTYTQVFGEWLCDAAELDSRVVGITPAMREGSGMVEFEKRFPDRYYDVGIAEQHAVTFAGGLATEGMKPVVAIYSTFLQRGYDQLIHDVALQNLPVVFAIDRAGLVGADGATHAGAYDLAFMRCIPNMTIMAASDENECRQMLYTALQQPNPTAVRYPRGAGTGVATVKQMAALPLGKGEVRRQSTQPAGKRIAILAFGTMVAPSLAAAEQLDATVANMRFVKPIDAALVRELAETHDAVVTVEEGCVMGGAGSACVEAMMESGVIRPVLQLGLPDRFIDHGDPAKLLASCGLDAAGIAKSIRERFVEHASGKSVKRVA.

Thiamine diphosphate is bound by residues His-74 and 115 to 117 (AHS). Mg(2+) is bound at residue Asp-146. Thiamine diphosphate-binding positions include 147 to 148 (GA), Asn-176, Tyr-283, and Glu-365. Asn-176 serves as a coordination point for Mg(2+).

This sequence belongs to the transketolase family. DXPS subfamily. Homodimer. It depends on Mg(2+) as a cofactor. The cofactor is thiamine diphosphate.

It carries out the reaction D-glyceraldehyde 3-phosphate + pyruvate + H(+) = 1-deoxy-D-xylulose 5-phosphate + CO2. The protein operates within metabolic intermediate biosynthesis; 1-deoxy-D-xylulose 5-phosphate biosynthesis; 1-deoxy-D-xylulose 5-phosphate from D-glyceraldehyde 3-phosphate and pyruvate: step 1/1. Functionally, catalyzes the acyloin condensation reaction between C atoms 2 and 3 of pyruvate and glyceraldehyde 3-phosphate to yield 1-deoxy-D-xylulose-5-phosphate (DXP). In Paraburkholderia phymatum (strain DSM 17167 / CIP 108236 / LMG 21445 / STM815) (Burkholderia phymatum), this protein is 1-deoxy-D-xylulose-5-phosphate synthase.